The primary structure comprises 119 residues: Large ribosomal subunit protein bL20 (119 aa).

Belongs to the bacterial ribosomal protein bL20 family.

Functionally, binds directly to 23S ribosomal RNA and is necessary for the in vitro assembly process of the 50S ribosomal subunit. It is not involved in the protein synthesizing functions of that subunit. This chain is Large ribosomal subunit protein bL20, found in Syntrophus aciditrophicus (strain SB).